Reading from the N-terminus, the 3014-residue chain is Genome polyprotein (3014 aa).

Residue S2 is modified to N-acetylserine; by host. Positions 2-23 are interaction with STAT1; sequence STNPKPQRKTKRNTNRRPQDVK. The segment at 2 to 58 is interaction with EIF2AK2/PKR; it reads STNPKPQRKTKRNTNRRPQDVKFPGGGQIVGGVYLLPRRGPRLGVRATRKTSERSQP. Positions 2–59 are interaction with DDX3X; the sequence is STNPKPQRKTKRNTNRRPQDVKFPGGGQIVGGVYLLPRRGPRLGVRATRKTSERSQPR. The disordered stretch occupies residues 2–75; sequence STNPKPQRKT…PKARQPTGRS (74 aa). Topologically, residues 2 to 168 are cytoplasmic; the sequence is STNPKPQRKT…EDGVNYATGN (167 aa). 2 short sequence motifs (nuclear localization signal) span residues 5–13 and 38–43; these read PKPQRKTKR and PRRGPR. Positions 7–16 are enriched in basic residues; it reads PQRKTKRNTN. A compositionally biased stretch (low complexity) spans 32–47; sequence GGVYLLPRRGPRLGVR. S53 is subject to Phosphoserine; by host. 2 short sequence motifs (nuclear localization signal) span residues 58–64 and 66–71; these read PRGRRQP and PKARQP. 2 positions are modified to phosphoserine; by host: S99 and S116. The segment at 112–152 is important for endoplasmic reticulum and mitochondrial localization; sequence PRRKSRNLGKVIDTLTCGFADLMGYIPLVGGPVGGVARALA. Residues 122 to 173 are interaction with APOA2; sequence VIDTLTCGFADLMGYIPLVGGPVGGVARALAHGVRVLEDGVNYATGNLPGCS. An important for lipid droplets localization region spans residues 164-167; it reads YATG. The helical transmembrane segment at 169 to 189 threads the bilayer; that stretch reads LPGCSFSIFILALLSCLTVPT. Positions 178 to 191 are cleaved as a propeptide — ER anchor for the core protein, removed in mature form by host signal peptidase; that stretch reads ILALLSCLTVPTSA. The Lumenal portion of the chain corresponds to 190–358; it reads SAVPYRNASG…AGAHWGVLFA (169 aa). N-linked (GlcNAc...) asparagine; by host glycans are attached at residues N196, N209, and N234. The interval 265–296 is important for fusion; that stretch reads LAGGAALCSALYVGDACGAVFLVGQMFTYSPR. N305 carries N-linked (GlcNAc...) asparagine; by host glycosylation. A helical transmembrane segment spans residues 359–379; sequence AAYYASAANWAKVVLVLFLFA. The Lumenal portion of the chain corresponds to 380–726; it reads GVDANTRTVG…WEYIVLAFLL (347 aa). The segment at 385 to 412 is HVR1; it reads TRTVGGSAAQGARGLASLFTPGPQQNLQ. N417, N423, and N430 each carry an N-linked (GlcNAc...) (high mannose) asparagine; by host glycan. 4 cysteine pairs are disulfide-bonded: C429-C553, C452-C459, C487-C495, and C504-C509. N448 carries N-linked (GlcNAc...) asparagine; by host glycosylation. Positions 475–479 are HVR2; sequence AAVSG. The interval 481–494 is CD81-binding 1; sequence SDDKPYCWHYPPRP. N533 carries an N-linked (GlcNAc...) asparagine; by host glycan. The tract at residues 545–552 is CD81-binding 2; that stretch reads PPTGNWFG. N557 is a glycosylation site (N-linked (GlcNAc...) asparagine; by host). A disulfide bridge connects residues C565 and C570. The N-linked (GlcNAc...) asparagine; by host glycan is linked to N578. Disulfide bonds link C582–C586, C598–C621, and C608–C645. N624 and N646 each carry an N-linked (GlcNAc...) (high mannose) asparagine; by host glycan. C653 and C678 are disulfide-bonded. Residues 661–672 are PKR/eIF2-alpha phosphorylation homology domain (PePHD); it reads AELSPLLHTTTQ. The helical transmembrane segment at 727–747 threads the bilayer; the sequence is LADARICTCLWIMLLVCQAEA. Over 748–758 the chain is Lumenal; the sequence is ALENVIVLNAA. Residues 759 to 779 traverse the membrane as a helical segment; it reads AAAGTHGFFWGLLVICFAWHF. Over 780 to 783 the chain is Cytoplasmic; that stretch reads KGRL. The helical transmembrane segment at 784 to 804 threads the bilayer; it reads VPGATYLCLGIWPLLLLLFLL. The Lumenal segment spans residues 805-814; sequence PQRALALDSS. The chain crosses the membrane as a helical span at residues 815–835; sequence DGGTVGCLVLTILTIFTLTPG. The Cytoplasmic portion of the chain corresponds to 836–882; the sequence is YKKMVVLVIWWLQYFIARVEAFIHVWVPPLQVRGGRDAIIMLTCLFH. A helical transmembrane segment spans residues 883–903; the sequence is PALGFEVTKILLGILGPLYLL. At 904 to 929 the chain is on the lumenal side; sequence QYSLIKLPYFIRARALLRACLLAKHL. One can recognise a Peptidase C18 domain in the interval 904–1027; it reads QYSLIKLPYF…DIREAGWRLL (124 aa). Positions 905–1207 are protease NS2-3; the sequence is YSLIKLPYFI…PVENLETTMR (303 aa). C923 carries S-palmitoyl cysteine; by host lipidation. Residues 930 to 950 traverse the membrane as a helical segment; it reads ACGRYVQAALLHLGRLTGTYI. Residues 930–950 are interaction with host SCPS1; the sequence is ACGRYVQAALLHLGRLTGTYI. The Cytoplasmic portion of the chain corresponds to 951 to 1658; it reads YDHLAPMKDW…CMSADLEVIT (708 aa). Active-site for protease NS2 activity; shared with dimeric partner residues include H953, E973, and C994. The region spanning 1028-1209 is the Peptidase S29 domain; that stretch reads APITAYAQQT…ENLETTMRSP (182 aa). Catalysis depends on charge relay system; for serine protease NS3 activity residues H1084 and D1108. Zn(2+) is bound by residues C1124 and C1126. S1166 functions as the Charge relay system; for serine protease NS3 activity in the catalytic mechanism. Zn(2+) is bound by residues C1172 and H1176. In terms of domain architecture, Helicase ATP-binding spans 1218–1370; sequence PAVPHEFQVG…PNIEEVALPS (153 aa). Position 1231-1238 (1231-1238) interacts with ATP; sequence APTGSGKS. Residues S1238 and E1318 each contribute to the Mg(2+) site. The DECH box signature appears at 1317–1320; the sequence is DECH. Residues 1487-1499 form an RNA-binding region; the sequence is QRRGRTGRGRHGI. Residues 1659-1679 traverse the membrane as a helical segment; sequence STWVLVGGVVAALAAYCLTVG. The segment at 1680–1691 is NS3-binding; the sequence is SVAIVGRIILSG. The Cytoplasmic portion of the chain corresponds to 1680 to 1806; that stretch reads SVAIVGRIIL…AVTSPLTTQQ (127 aa). The helical transmembrane segment at 1807-1827 threads the bilayer; the sequence is TLLFNILGGWVASQIAPPTAA. The Lumenal portion of the chain corresponds to 1828–1829; it reads TA. Residues 1830–1850 form a helical membrane-spanning segment; the sequence is FVVSGMAGAAVGSIGLGRVLI. Position 1851 (D1851) is a topological domain, cytoplasmic. Residues 1852 to 1872 traverse the membrane as a helical segment; that stretch reads ILAGYGAGVAGALVAFKIMCG. Residues 1873–1882 are Lumenal-facing; that stretch reads EKPTAEDLVN. A helical membrane pass occupies residues 1883–1903; the sequence is LLPSILCPGALVVGVICAAVL. The Cytoplasmic segment spans residues 1904-1973; it reads RRHIGPGEGA…WIGEDYSTPC (70 aa). The S-palmitoyl cysteine; by host moiety is linked to residue C1973. Residues 1974 to 2003 lie within the membrane without spanning it; it reads DGTWLRAIWDWVCTALTDFKAWLQAKLLPQ. Topologically, residues 2004 to 2993 are cytoplasmic; the sequence is LPGVPFLSCQ…YHSMSRARPR (990 aa). Positions 2012, 2030, 2032, and 2053 each coordinate Zn(2+). The segment at 2121–2209 is FKBP8-binding; it reads EFFTELDGVR…ASSSASQLSA (89 aa). The transcriptional activation stretch occupies residues 2121-2334; that stretch reads EFFTELDGVR…VPPPRRKRKP (214 aa). Residues 2136–2140 form an interaction with non-structural protein 4A region; that stretch reads PPCNP. 3 disordered regions span residues 2187 to 2219, 2301 to 2337, and 2358 to 2413; these read AKRRLDRGSPPSLASSSASQLSAPSLKATCTTQ, TWKQPDYDPPQVSGCPLPPAGLPPVPPPRRKRKPVVL, and TQSI…SWST. The segment at 2190–2441 is interaction with host SKP2; sequence RLDRGSPPSL…ALITPCSAEE (252 aa). Residues S2195, S2198, S2202, S2205, S2208, and S2211 each carry the phosphoserine; by host modification. Residues 2195–2212 show a composition bias toward low complexity; that stretch reads SPPSLASSSASQLSAPSL. The tract at residues 2211-2250 is ISDR; the sequence is SLKATCTTQGHHPDADLIEANLLWRQCMGGNITRVEAENK. The tract at residues 2211–2276 is interaction with EIF2AK2/PKR; it reads SLKATCTTQG…REISVSADCF (66 aa). The interval 2250-2307 is NS4B-binding; the sequence is KVVILDSFEPLKADDDDREISVSADCFRRGPAFPPALPIWARPGYDPPLLETWKQPDY. The V3 stretch occupies residues 2300-2378; the sequence is ETWKQPDYDP…GTSSQPDSGP (79 aa). The segment covering 2316 to 2327 has biased composition (pro residues); the sequence is PLPPAGLPPVPP. The SH3-binding motif lies at 2323-2326; that stretch reads PPVP. Positions 2328 to 2337 match the Nuclear localization signal motif; sequence PRRKRKPVVL. Over residues 2358–2375 the composition is skewed to polar residues; it reads TQSIEGQDSAVGTSSQPD. At S2465 the chain carries Phosphoserine; by host. The 119-residue stretch at 2637 to 2755 folds into the RdRp catalytic domain; that stretch reads PMAFSYDTRC…ICESQGTHED (119 aa). The Mg(2+) site is built by D2643, D2741, and D2742. The chain crosses the membrane as a helical span at residues 2994-3014; that stretch reads CILLCLLLLTVGVGIFLLPAR.

This sequence belongs to the hepacivirus polyprotein family. Homooligomer. Interacts with E1 (via C-terminus). Interacts with the non-structural protein 5A. Interacts (via N-terminus) with host STAT1 (via SH2 domain); this interaction results in decreased STAT1 phosphorylation and ubiquitin-mediated proteasome-dependent STAT1 degradation, leading to decreased IFN-stimulated gene transcription. Interacts with host STAT3; this interaction constitutively activates STAT3. Interacts with host LTBR receptor. Interacts with host TNFRSF1A receptor and possibly induces apoptosis. Interacts with host HNRPK. Interacts with host YWHAE. Interacts with host UBE3A/E6AP. Interacts with host DDX3X. Interacts with host APOA2. Interacts with host RXRA protein. Interacts with host SP110 isoform 3/Sp110b; this interaction sequesters the transcriptional corepressor SP110 away from the nucleus. Interacts with host CREB3 nuclear transcription protein; this interaction triggers cell transformation. Interacts with host ACY3. Interacts with host C1QR1. Interacts with host RBM24; this interaction, which enhances the interaction of the mature core protein with 5'-UTR, may inhibit viral translation and favor replication. Interacts with host EIF2AK2/PKR; this interaction induces the autophosphorylation of EIF2AK2. Part of the viral assembly initiation complex composed of NS2, E1, E2, NS3, NS4A, NS5A and the mature core protein. In terms of assembly, forms a heterodimer with envelope glycoprotein E2. Interacts with mature core protein. Interacts with protease NS2. The heterodimer E1/E2 interacts with host CLDN1; this interaction plays a role in viral entry into host cell. Interacts with host SPSB2 (via C-terminus). Part of the viral assembly initiation complex composed of NS2, E1, E2, NS3, NS4A, NS5A and the mature core protein. Interacts with host NEURL3; this interaction prevents E1 binding to glycoprotein E2. As to quaternary structure, forms a heterodimer with envelope glycoprotein E1. Interacts with host CD81 and SCARB1 receptors; these interactions play a role in viral entry into host cell. Interacts with host EIF2AK2/PKR; this interaction inhibits EIF2AK2 and probably allows the virus to evade the innate immune response. Interacts with host CD209/DC-SIGN and CLEC4M/DC-SIGNR. Interact with host SPCS1; this interaction is essential for viral particle assembly. Interacts with protease NS2. The heterodimer E1/E2 interacts with host CLDN1; this interaction plays a role in viral entry into host cell. Part of the viral assembly initiation complex composed of NS2, E1, E2, NS3, NS4A, NS5A and the mature core protein. Interacts with host SLC3A2/4F2hc; the interaction may facilitate viral entry into host cell. Interacts with human PLSCR1. Homohexamer. Homoheptamer. Interacts with protease NS2. In terms of assembly, homodimer. Interacts with host SPCS1; this interaction is essential for viral particle assembly. Interacts with envelope glycoprotein E1. Interacts with envelope glycoprotein E2. Interacts with viroporin p7. Interacts with serine protease/helicase NS3. Part of the replication complex composed of NS2, NS3, NS4A, NS4B, NS5A and the RNA-directed RNA polymerase embedded in an ER-derived membranous web. Part of the viral assembly initiation complex composed of NS2, E1, E2, NS3, NS4A, NS5A and the mature core protein. As to quaternary structure, interacts with protease NS2. Interacts with non-structural protein 4A; this interaction stabilizes the folding of NS3 serine protease. NS3-NS4A interaction is essential for NS3 activation and allows membrane anchorage of the latter. NS3/NS4A complex also prevents phosphorylation of host IRF3, thus preventing the establishment of dsRNA induced antiviral state. Interacts with host MAVS; this interaction leads to the cleavage and inhibition of host MAVS. Interacts with host TICAM1; this interaction leads to the cleavage and inhibition of host TICAM1. Interacts with host TANK-binding kinase/TBK1; this interaction results in the inhibition of the association between TBK1 and IRF3, which leads to the inhibition of IRF3 activation. Interacts with host RBM24. Part of the replication complex composed of NS2, NS3, NS4A, NS4B, NS5A and the RNA-directed RNA polymerase embedded in an ER-derived membranous web. Part of the viral assembly initiation complex composed of NS2, E1, E2, NS3, NS4A, NS5A and the mature core protein. Interacts with NS3 serine protease; this interaction stabilizes the folding of NS3 serine protease. NS3-NS4A interaction is essential for NS3 activation and allows membrane anchorage of the latter. Interacts with non-structural protein 5A (via N-terminus). Part of the replication complex composed of NS2, NS3, NS4A, NS4B, NS5A and the RNA-directed RNA polymerase embedded in an ER-derived membranous web. Part of the viral assembly initiation complex composed of NS2, E1, E2, NS3, NS4A, NS5A and the mature core protein. In terms of assembly, homomultimer. Interacts with non-structural protein NS5A. Interacts with host PLA2G4C; this interaction likely initiates the recruitment of replication complexes to lipid droplets. Interacts with host STING; this interaction disrupts the interaction between STING and TBK1 thereby suppressing the interferon signaling. Part of the replication complex composed of NS2, NS3, NS4A, NS4B, NS5A and the RNA-directed RNA polymerase embedded in an ER-derived membranous web. As to quaternary structure, monomer. Homodimer; dimerization is required for RNA-binding. Interacts with the mature core protein. Interacts (via N-terminus) with non-structural protein 4A. Interacts with non-structural protein 4B. Interacts (via region D2) with RNA-directed RNA polymerase. Part of the viral assembly initiation complex composed of NS2, E1, E2, NS3, NS4A, NS5A and the mature core protein. Part of the replication complex composed of NS2, NS3, NS4A, NS4B, NS5A and the RNA-directed RNA polymerase embedded in an ER-derived membranous web. Interacts with host GRB2. Interacts with host BIN1. Interacts with host PIK3R1. Interacts with host SRCAP. Interacts with host FKBP8. Interacts (via C-terminus) with host VAPB (via MSP domain). Interacts with host EIF2AK2/PKR; this interaction leads to disruption of EIF2AK2 dimerization by NS5A and probably allows the virus to evade the innate immune response. Interacts (via N-terminus) with host PACSIN2 (via N-terminus); this interaction attenuates protein kinase C alpha-mediated phosphorylation of PACSIN2 by disrupting the interaction between PACSIN2 and PRKCA. Interacts (via N-terminus) with host SRC kinase (via SH2 domain). Interacts with most Src-family kinases. Interacts with host IFI27 and SKP2; promotes the ubiquitin-mediated proteasomal degradation of NS5A. Interacts with host GPS2. Interacts with host TNFRSF21; this interaction allows the modulation by the virus of JNK, p38 MAPK, STAT3, and Akt signaling pathways in a DR6-dependent manner. Interacts (via N-terminus) with host CIDEB (via N-terminus); this interaction seems to regulate the association of HCV particles with APOE. Interacts with host CHKA/Choline Kinase-alpha; CHKA bridges host PI4KA and NS5A and potentiates NS5A-stimulated PI4KA activity, which then facilitates the targeting of the ternary complex to the ER for viral replication. Interacts with host SPSB2 (via C-terminus); this interaction targets NS5A for ubiquitination and degradation. Interacts with host RAB18; this interaction may promote the association of NS5A and other replicase components with lipid droplets. Interacts (via region D2) with host PPIA/CYPA; the interaction stimulates RNA-binding ability of NS5A and is dependent on the peptidyl-prolyl cis-trans isomerase activity of PPIA/CYPA. Interacts with host TRIM14; this interaction induces the degradation of NS5A. Homooligomer. Interacts with non-structural protein 5A. Interacts with host VAPB. Interacts with host PRK2/PKN2. Interacts with host HNRNPA1 and SEPT6; these interactions facilitate viral replication. Part of the replication complex composed of NS2, NS3, NS4A, NS4B, NS5A and the RNA-directed RNA polymerase. Zn(2+) serves as cofactor. It depends on Mg(2+) as a cofactor. In terms of processing, specific enzymatic cleavages in vivo yield mature proteins. The structural proteins, core, E1, E2 and p7 are produced by proteolytic processing by host signal peptidases. The core protein precursor is synthesized as a 23 kDa, which is retained in the ER membrane through the hydrophobic signal peptide. Cleavage by the signal peptidase releases the 21 kDa mature core protein. The cleavage of the core protein precursor occurs between aminoacids 176 and 188 but the exact cleavage site is not known. Some degraded forms of the core protein appear as well during the course of infection. The other proteins (p7, NS2, NS3, NS4A, NS4B, NS5A and NS5B) are cleaved by the viral proteases. Autoprocessing between NS2 and NS3 is mediated by the NS2 cysteine protease catalytic domain and regulated by the NS3 N-terminal domain. Post-translationally, phosphorylated by host PKC and PKA. Ubiquitinated; mediated by UBE3A and leading to core protein subsequent proteasomal degradation. In terms of processing, highly N-glycosylated. Post-translationally, palmitoylation is required for NS2/3 autoprocessing and E2 recruitment to membranes. Palmitoylated. This modification may play a role in its polymerization or in protein-protein interactions. In terms of processing, phosphorylated on serines in a basal form termed p56. p58 is a hyperphosphorylated form of p56. p56 and p58 coexist in the cell in roughly equivalent amounts. Hyperphosphorylation is dependent on the presence of NS4A. Host CSNK1A1/CKI-alpha or RPS6KB1 kinases may be responsible for NS5A phosphorylation. Post-translationally, tyrosine phosphorylation is essential for the interaction with host SRC. The N-terminus is phosphorylated by host PRK2/PKN2.

The protein localises to the host endoplasmic reticulum membrane. It localises to the host mitochondrion membrane. It is found in the virion. Its subcellular location is the host cytoplasm. The protein resides in the host nucleus. The protein localises to the host lipid droplet. It localises to the virion membrane. It is found in the host mitochondrion. Its subcellular location is the host cell membrane. The protein resides in the host perinuclear region. It catalyses the reaction Hydrolysis of four peptide bonds in the viral precursor polyprotein, commonly with Asp or Glu in the P6 position, Cys or Thr in P1 and Ser or Ala in P1'.. The catalysed reaction is a ribonucleoside 5'-triphosphate + H2O = a ribonucleoside 5'-diphosphate + phosphate + H(+). The enzyme catalyses ATP + H2O = ADP + phosphate + H(+). It carries out the reaction RNA(n) + a ribonucleoside 5'-triphosphate = RNA(n+1) + diphosphate. With respect to regulation, inhibited by the antiviral drug hexamethylene amiloride. Inhibition by amantadine appears to be genotype-dependent. Also inhibited by long-alkyl-chain iminosugar derivatives. Its activity is regulated as follows. Activity is up-regulated by PRK2/PKN2-mediated phosphorylation. Functionally, packages viral RNA to form a viral nucleocapsid, and promotes virion budding. Participates in the viral particle production as a result of its interaction with the non-structural protein 5A. Binds RNA and may function as a RNA chaperone to induce the RNA structural rearrangements taking place during virus replication. Modulates viral translation initiation by interacting with viral IRES and 40S ribosomal subunit. Affects various cell signaling pathways, host immunity and lipid metabolism. Prevents the establishment of cellular antiviral state by blocking the interferon-alpha/beta (IFN-alpha/beta) and IFN-gamma signaling pathways and by blocking the formation of phosphorylated STAT1 and promoting ubiquitin-mediated proteasome-dependent degradation of STAT1. Activates STAT3 leading to cellular transformation. Regulates the activity of cellular genes, including c-myc and c-fos. May repress the promoter of p53, and sequester CREB3 and SP110 isoform 3/Sp110b in the cytoplasm. Represses cell cycle negative regulating factor CDKN1A, thereby interrupting an important check point of normal cell cycle regulation. Targets transcription factors involved in the regulation of inflammatory responses and in the immune response: suppresses TNF-induced NF-kappa-B activation, and activates AP-1. Binds to dendritic cells (DCs) via C1QR1, resulting in down-regulation of T-lymphocytes proliferation. Alters lipid metabolism by interacting with hepatocellular proteins involved in lipid accumulation and storage. Induces up-regulation of FAS promoter activity, and thereby contributes to the increased triglyceride accumulation in hepatocytes (steatosis). Forms a heterodimer with envelope glycoprotein E2, which mediates virus attachment to the host cell, virion internalization through clathrin-dependent endocytosis and fusion with host membrane. Fusion with the host cell is most likely mediated by both E1 and E2, through conformational rearrangements of the heterodimer required for fusion rather than a classical class II fusion mechanism. E1/E2 heterodimer binds host apolipoproteins such as APOB and ApoE thereby forming a lipo-viro-particle (LVP). APOE associated to the LVP allows the initial virus attachment to cell surface receptors such as the heparan sulfate proteoglycans (HSPGs), syndecan-1 (SDC1), syndecan-1 (SDC2), the low-density lipoprotein receptor (LDLR) and scavenger receptor class B type I (SCARB1). The cholesterol transfer activity of SCARB1 allows E2 exposure and binding of E2 to SCARB1 and the tetraspanin CD81. E1/E2 heterodimer binding on CD81 activates the epithelial growth factor receptor (EGFR) signaling pathway. Diffusion of the complex E1-E2-EGFR-SCARB1-CD81 to the cell lateral membrane allows further interaction with Claudin 1 (CLDN1) and occludin (OCLN) to finally trigger HCV entry. In terms of biological role, forms a heterodimer with envelope glycoprotein E1, which mediates virus attachment to the host cell, virion internalization through clathrin-dependent endocytosis and fusion with host membrane. Fusion with the host cell is most likely mediated by both E1 and E2, through conformational rearrangements of the heterodimer required for fusion rather than a classical class II fusion mechanism. The interaction between envelope glycoprotein E2 and host apolipoprotein E/APOE allows the proper assembly, maturation and infectivity of the viral particles. This interaction is probably promoted via the up-regulation of cellular autophagy by the virus. E1/E2 heterodimer binds host apolipoproteins such as APOB and APOE thereby forming a lipo-viro-particle (LVP). APOE associated to the LVP allows the initial virus attachment to cell surface receptors such as the heparan sulfate proteoglycans (HSPGs), syndecan-1 (SDC1), syndecan-1 (SDC2), the low-density lipoprotein receptor (LDLR) and scavenger receptor class B type I (SCARB1). The cholesterol transfer activity of SCARB1 allows E2 exposure and binding of E2 to SCARB1 and the tetraspanin CD81. E1/E2 heterodimer binding on CD81 activates the epithelial growth factor receptor (EGFR) signaling pathway. Diffusion of the complex E1-E2-EGFR-SCARB1-CD81 to the cell lateral membrane allows further interaction with Claudin 1 (CLDN1) and occludin (OCLN) to finally trigger HCV entry. Inhibits host EIF2AK2/PKR activation, preventing the establishment of an antiviral state. Viral ligand for CD209/DC-SIGN and CLEC4M/DC-SIGNR, which are respectively found on dendritic cells (DCs), and on liver sinusoidal endothelial cells and macrophage-like cells of lymph node sinuses. These interactions allow the capture of circulating HCV particles by these cells and subsequent facilitated transmission to permissive cells such as hepatocytes and lymphocyte subpopulations. The interaction between E2 and host amino acid transporter complex formed by SLC3A2 and SLC7A5/LAT1 may facilitate viral entry into host cell. Its function is as follows. Ion channel protein that acts as a viroporin and plays an essential role in the assembly, envelopment and secretion of viral particles. Regulates the host cell secretory pathway, which induces the intracellular retention of viral glycoproteins and favors assembly of viral particles. Creates a pore in acidic organelles and releases Ca(2+) and H(+) in the cytoplasm of infected cells, leading to a productive viral infection. High levels of cytoplasmic Ca(2+) may trigger membrane trafficking and transport of viral ER-associated proteins to viroplasms, sites of viral genome replication. This ionic imbalance induces the assembly of the inflammasome complex, which triggers the maturation of pro-IL-1beta into IL-1beta through the action of caspase-1. Targets also host mitochondria and induces mitochondrial depolarization. In addition of its role as a viroporin, acts as a lipid raft adhesion factor. Functionally, cysteine protease required for the proteolytic auto-cleavage between the non-structural proteins NS2 and NS3. The N-terminus of NS3 is required for the function of NS2 protease (active region NS2-3). Promotes the initiation of viral particle assembly by mediating the interaction between structural and non-structural proteins. Displays three enzymatic activities: serine protease with a chymotrypsin-like fold, NTPase and RNA helicase. NS3 serine protease, in association with NS4A, is responsible for the cleavages of NS3-NS4A, NS4A-NS4B, NS4B-NS5A and NS5A-NS5B. The NS3/NS4A complex prevents phosphorylation of host IRF3, thus preventing the establishment of dsRNA induced antiviral state. The NS3/NS4A complex induces host amino acid transporter component SLC3A2, thus contributing to HCV propagation. NS3 RNA helicase binds to RNA and unwinds both dsDNA and dsRNA in the 3' to 5' direction, and likely resolves RNA complicated stable secondary structures in the template strand. Binds a single ATP and catalyzes the unzipping of a single base pair of dsRNA. Inhibits host antiviral proteins TBK1 and IRF3 thereby preventing the establishment of an antiviral state. Cleaves host MAVS/CARDIF thereby preventing the establishment of an antiviral state. Cleaves host TICAM1/TRIF, thereby disrupting TLR3 signaling and preventing the establishment of an antiviral state. In terms of biological role, peptide cofactor which forms a non-covalent complex with the N-terminal of NS3 serine protease. The NS3/NS4A complex prevents phosphorylation of host IRF3, thus preventing the establishment of dsRNA induced antiviral state. The NS3/NS4A complex induces host amino acid transporter component SLC3A2, thus contributing to HCV propagation. Its function is as follows. Induces a specific membrane alteration that serves as a scaffold for the virus replication complex. This membrane alteration gives rise to the so-called ER-derived membranous web that contains the replication complex. NS4B self-interaction contributes to its function in membranous web formation. Promotes host TRIF protein degradation in a CASP8-dependent manner thereby inhibiting host TLR3-mediated interferon signaling. Disrupts the interaction between STING and TBK1 contributing to the inhibition of interferon signaling. Functionally, phosphorylated protein that is indispensable for viral replication and assembly. Both hypo- and hyperphosphorylated states are required for the viral life cycle. The hyperphosphorylated form of NS5A is an inhibitor of viral replication. Involved in RNA-binding and especially in binding to the viral genome. Zinc is essential for RNA-binding. Participates in the viral particle production as a result of its interaction with the mature viral core protein. Its interaction with host VAPB may target the viral replication complex to vesicles. Down-regulates viral IRES translation initiation. Mediates interferon resistance, presumably by interacting with and inhibiting host EIF2AK2/PKR. Prevents BIN1-induced apoptosis. Acts as a transcriptional activator of some host genes important for viral replication when localized in the nucleus. Via the interaction with host PACSIN2, modulates lipid droplet formation in order to promote virion assembly. Modulates TNFRSF21/DR6 signaling pathway for viral propagation. RNA-dependent RNA polymerase that performs primer-template recognition and RNA synthesis during viral replication. Initiates RNA transcription/replication at a flavin adenine dinucleotide (FAD), resulting in a 5'- FAD cap on viral RNAs. In this way, recognition of viral 5' RNA by host pattern recognition receptors can be bypassed, thereby evading activation of antiviral pathways. This chain is Genome polyprotein, found in Hepatitis C virus genotype 5a (isolate SA13) (HCV).